A 188-amino-acid polypeptide reads, in one-letter code: Putative manganese efflux pump MntP (188 aa).

Helical transmembrane passes span W3–A23, L39–M59, I65–V85, G104–S124, I125–V145, and I167–L187.

This sequence belongs to the MntP (TC 9.B.29) family.

The protein resides in the cell inner membrane. Probably functions as a manganese efflux pump. In Citrifermentans bemidjiense (strain ATCC BAA-1014 / DSM 16622 / JCM 12645 / Bem) (Geobacter bemidjiensis), this protein is Putative manganese efflux pump MntP.